A 302-amino-acid polypeptide reads, in one-letter code: Protoheme IX farnesyltransferase (302 aa).

The next 9 helical transmembrane spans lie at 24–44, 48–68, 97–117, 120–140, 147–167, 174–194, 221–241, 245–265, and 282–302; these read VVSL…FSGY, FFSV…AGAL, AALV…ELAV, LSAV…TVYL, NIVV…AAVA, SLVL…ALAL, ILCY…LRFS, YMIV…NVYL, and FLLF…GMLI.

The protein belongs to the UbiA prenyltransferase family. Protoheme IX farnesyltransferase subfamily.

It localises to the cell inner membrane. The catalysed reaction is heme b + (2E,6E)-farnesyl diphosphate + H2O = Fe(II)-heme o + diphosphate. It functions in the pathway porphyrin-containing compound metabolism; heme O biosynthesis; heme O from protoheme: step 1/1. In terms of biological role, converts heme B (protoheme IX) to heme O by substitution of the vinyl group on carbon 2 of heme B porphyrin ring with a hydroxyethyl farnesyl side group. The polypeptide is Protoheme IX farnesyltransferase (Neorickettsia sennetsu (strain ATCC VR-367 / Miyayama) (Ehrlichia sennetsu)).